Here is a 149-residue protein sequence, read N- to C-terminus: Deoxyuridine 5'-triphosphate nucleotidohydrolase (149 aa).

Substrate contacts are provided by residues 68-70, Asn-81, 85-87, and Lys-95; these read RSG and TID.

It belongs to the dUTPase family. Requires Mg(2+) as cofactor.

The catalysed reaction is dUTP + H2O = dUMP + diphosphate + H(+). Its pathway is pyrimidine metabolism; dUMP biosynthesis; dUMP from dCTP (dUTP route): step 2/2. This enzyme is involved in nucleotide metabolism: it produces dUMP, the immediate precursor of thymidine nucleotides and it decreases the intracellular concentration of dUTP so that uracil cannot be incorporated into DNA. The sequence is that of Deoxyuridine 5'-triphosphate nucleotidohydrolase from Bdellovibrio bacteriovorus (strain ATCC 15356 / DSM 50701 / NCIMB 9529 / HD100).